A 532-amino-acid chain; its full sequence is Probable cytochrome P450 524A1 (532 aa).

The helical transmembrane segment at 8–28 threads the bilayer; the sequence is FIIFILLAALAVFVSEATSKV. Cys478 contacts heme.

It belongs to the cytochrome P450 family. Heme serves as cofactor.

The protein resides in the membrane. The sequence is that of Probable cytochrome P450 524A1 (cyp524A1) from Dictyostelium discoideum (Social amoeba).